Here is a 211-residue protein sequence, read N- to C-terminus: Claudin-7 (211 aa).

Over 1–7 (MANSGLQ) the chain is Cytoplasmic. The helical transmembrane segment at 8–28 (LLGFSMAMLGWVGLIASTAIP) threads the bilayer. Residues 29 to 81 (QWQMSSYAGDNIITAQAMYKGLWMECVTQSTGMMSCKMYDSVLALPAATQATR) are Extracellular-facing. A helical transmembrane segment spans residues 82 to 102 (ALMIVSLVLGFLAMFVATMGM). The Cytoplasmic portion of the chain corresponds to 103–119 (KCTRCGGDDKVKKARIA). A helical membrane pass occupies residues 120–140 (MTGGIIFIVAGLAALVACSWI). Residues 141–160 (GHQIVTDFYNPLTPMNIKYE) lie on the Extracellular side of the membrane. Residues 161-181 (FGPAIFIGWAGSALVLLGGAL) traverse the membrane as a helical segment. Residues 182-211 (LSCSCPGSESKAAYRAPRSYPKSNSSKEYV) lie on the Cytoplasmic side of the membrane. Residues 210–211 (YV) form an interactions with TJP1, TJP2 and TJP3 region.

Belongs to the claudin family. As to quaternary structure, directly interacts with TJP1/ZO-1, TJP2/ZO-2 and TJP3/ZO-3. The phosphorylated form interacts with EPCAM. Post-translationally, phosphorylated.

The protein resides in the cell membrane. The protein localises to the basolateral cell membrane. Its subcellular location is the cell junction. It localises to the tight junction. Plays a major role in tight junction-specific obliteration of the intercellular space. This chain is Claudin-7 (Cldn7), found in Rattus norvegicus (Rat).